Consider the following 842-residue polypeptide: Glucans biosynthesis glucosyltransferase H (842 aa).

6 helical membrane-spanning segments follow: residues 141–161 (LLLL…TILP), 194–214 (ILLL…TALM), 513–533 (VFLT…FLAL), 570–590 (LFAS…ILIW), 615–635 (VLLA…AFLG), and 680–700 (FLFW…VSVI).

It belongs to the glycosyltransferase 2 family. OpgH subfamily.

The protein localises to the cell inner membrane. It participates in glycan metabolism; osmoregulated periplasmic glucan (OPG) biosynthesis. Functionally, involved in the biosynthesis of osmoregulated periplasmic glucans (OPGs). This is Glucans biosynthesis glucosyltransferase H from Enterobacter sp. (strain 638).